We begin with the raw amino-acid sequence, 279 residues long: Ultraviolet N-glycosylase/AP lyase (279 aa).

A HhH domain is found at 123 to 142 (LEDLVALPGVGRKTAFVVLG). The [4Fe-4S] cluster site is built by Cys203, Cys210, Cys213, and Cys219. The interval 256 to 279 (TAGAAGPRPRAGGXAPGLPAQPFR) is disordered.

It belongs to the Nth/MutY family. [4Fe-4S] cluster serves as cofactor.

Its function is as follows. DNA repair enzyme that has both DNA N-glycosylase activity and AP-lyase activity. Initiates repair at cis-syn pyrimidine dimers. Proceeds via an imino enzyme:DNA intermediate. This is Ultraviolet N-glycosylase/AP lyase (pdg) from Micrococcus luteus (strain ATCC 4698 / DSM 20030 / JCM 1464 / CCM 169 / CCUG 5858 / IAM 1056 / NBRC 3333 / NCIMB 9278 / NCTC 2665 / VKM Ac-2230) (Micrococcus lysodeikticus).